The following is a 159-amino-acid chain: Protein RseC (159 aa).

Topologically, residues 1-72 (MIKEWATVVS…QKVELGIAEG (72 aa)) are cytoplasmic. The chain crosses the membrane as a helical span at residues 73–95 (SLLSSALLVYMSPLVGLFLIASL). Residues 96–98 (FQL) lie on the Periplasmic side of the membrane. Residues 99–121 (LFASDVAALCGAILGGIGGFLIA) form a helical membrane-spanning segment. Over 122-159 (RGYSRKFAARAEWQPIILSVALPPGLVRFETSSEDASQ) the chain is Cytoplasmic.

Belongs to the RseC family.

The protein localises to the cell inner membrane. May play a role in reduction of the SoxR iron-sulfur cluster. May work together with the RsxABCDGE complex. This Escherichia coli (strain K12) protein is Protein RseC.